Here is a 62-residue protein sequence, read N- to C-terminus: uncharacterized protein (62 aa).

This is an uncharacterized protein from Saccharomyces cerevisiae (strain ATCC 204508 / S288c) (Baker's yeast).